The sequence spans 140 residues: UPF0102 protein ACIAD1132 (140 aa).

This sequence belongs to the UPF0102 family.

This is UPF0102 protein ACIAD1132 from Acinetobacter baylyi (strain ATCC 33305 / BD413 / ADP1).